The chain runs to 174 residues: 5-hydroxymethyl-dUMP N-hydrolase (174 aa).

Ala2 is modified (N-acetylalanine). Gly27 provides a ligand contact to 5-hydroxymethyl-dUMP. Ser28 is modified (phosphoserine). 5-hydroxymethyl-dUMP is bound by residues Ile29, Arg30, Gly31, Ser98, Gly100, and Glu104. Ser98 carries the phosphoserine modification. Ser123, Ser128, Ser138, and Ser169 each carry phosphoserine. Ser128 provides a ligand contact to 5-hydroxymethyl-dUMP.

Belongs to the 2'-deoxynucleoside 5'-phosphate N-hydrolase 1 family. As to quaternary structure, monomer and homodimer. As to expression, expressed at low levels in brain, colon, lung, peripheral blood leukocytes, placenta, small intestine, and thymus. Expressed at high levels in heart, kidney, liver, skeletal muscle and spleen. Overexpressed in a significant proportion of breast cancers.

It is found in the cytoplasm. The protein localises to the nucleus. It carries out the reaction 5-hydroxymethyl-dUMP + H2O = 5-hydroxymethyluracil + 2-deoxy-D-ribose 5-phosphate. With respect to regulation, inhibited by AMP and GMP. In terms of biological role, part of a nucleotide salvage pathway that eliminates epigenetically modified 5-hydroxymethyl-dCMP (hmdCMP) in a two-step process entailing deamination to cytotoxic 5-hydroxymethyl-dUMP (hmdUMP), followed by its hydrolysis into 5-hydroxymethyluracil (hmU) and 2-deoxy-D-ribose 5-phosphate (deoxyribosephosphate). Catalyzes the second step in that pathway, the hydrolysis of the N-glycosidic bond in hmdUMP, degrading this cytotoxic nucleotide to avoid its genomic integration. In Homo sapiens (Human), this protein is 5-hydroxymethyl-dUMP N-hydrolase.